A 311-amino-acid polypeptide reads, in one-letter code: Biotin synthase (311 aa).

Residues 32 to 258 (NGVQFCQLLN…LFPLSRIRLA (227 aa)) enclose the Radical SAM core domain. 3 residues coordinate [4Fe-4S] cluster: C47, C51, and C54. The [2Fe-2S] cluster site is built by C91, C124, C184, and R256.

This sequence belongs to the radical SAM superfamily. Biotin synthase family. In terms of assembly, homodimer. The cofactor is [4Fe-4S] cluster. Requires [2Fe-2S] cluster as cofactor.

It catalyses the reaction (4R,5S)-dethiobiotin + (sulfur carrier)-SH + 2 reduced [2Fe-2S]-[ferredoxin] + 2 S-adenosyl-L-methionine = (sulfur carrier)-H + biotin + 2 5'-deoxyadenosine + 2 L-methionine + 2 oxidized [2Fe-2S]-[ferredoxin]. Its pathway is cofactor biosynthesis; biotin biosynthesis; biotin from 7,8-diaminononanoate: step 2/2. Functionally, catalyzes the conversion of dethiobiotin (DTB) to biotin by the insertion of a sulfur atom into dethiobiotin via a radical-based mechanism. This Methylacidiphilum infernorum (isolate V4) (Methylokorus infernorum (strain V4)) protein is Biotin synthase.